The chain runs to 282 residues: MGAITLDGKATRDEILIDLKQRVAALTESGRTPGLGTILVGDDPGSHAYVRGKHADCAKVGITSIRRDLPVDITTAVLHDTIEELNANPDCTGYIVQLPLPKYLDENTALERVDPAKDADGLHPTNLGRLVLSTPAPLPCTARGILHLLRRYGVEIAGTHVVIIGRGVTVGRPLGLLLTRRSENATVTLCHTGTRNLAALTKQADIIVAAVGVPHLLTADMVRPGAVVVDVGVSRVETRLVGDVHPDVWEVAGHVSPNPGGVGPLTRVFLLTNVVELAEGRQ.

Residues 165–167 (GRG), T192, and V233 contribute to the NADP(+) site.

The protein belongs to the tetrahydrofolate dehydrogenase/cyclohydrolase family. As to quaternary structure, homodimer.

The catalysed reaction is (6R)-5,10-methylene-5,6,7,8-tetrahydrofolate + NADP(+) = (6R)-5,10-methenyltetrahydrofolate + NADPH. The enzyme catalyses (6R)-5,10-methenyltetrahydrofolate + H2O = (6R)-10-formyltetrahydrofolate + H(+). The protein operates within one-carbon metabolism; tetrahydrofolate interconversion. Catalyzes the oxidation of 5,10-methylenetetrahydrofolate to 5,10-methenyltetrahydrofolate and then the hydrolysis of 5,10-methenyltetrahydrofolate to 10-formyltetrahydrofolate. The chain is Bifunctional protein FolD from Mycobacterium leprae (strain Br4923).